The sequence spans 335 residues: MDRNFLNESNNSTNNRNKYVIYDEEESKPLFYNYDFRKKNKMVMYLFDWMMVVILLIVGGILFLKVTVRGRLFTLDDESISYPKLPELVPMHVLIPVIIALPLAIIIVVSLIVKRDCHDFHHAILGLAQSLALTLLLTGSFKCFIGGLRPNFLEVCDPTPASIAAGNPPVGFSKIYYDRSICSADDSIVNDALSAYPSGHSSITAASFGFLALFIHAKFKIFDNRGHIFLYVIVSGCIIGAGLIGISRVADYRHTFLNVLAGWSIGLIIALSCYRLNYSSLFGRDNHVSIHSHWLTYWNHHDNLNNNNNNIKNNFDLEKNCNQSPNNIALDELNK.

Helical transmembrane passes span 43-63 (VMYLFDWMMVVILLIVGGILF), 93-113 (VLIPVIIALPLAIIIVVSLIV), 124-144 (ILGLAQSLALTLLLTGSFKCF), 202-222 (SITAASFGFLALFIHAKFKIF), 226-246 (GHIFLYVIVSGCIIGAGLIGI), and 254-274 (HTFLNVLAGWSIGLIIALSCY).

It belongs to the PA-phosphatase related phosphoesterase family.

Its subcellular location is the membrane. The sequence is that of PA-phosphatase related-family protein DDB_G0275547 from Dictyostelium discoideum (Social amoeba).